Reading from the N-terminus, the 763-residue chain is Putative alpha-1,3-mannosyltransferase MNN15 (763 aa).

The Cytoplasmic portion of the chain corresponds to 1–7 (MRFTLKK). The helical transmembrane segment at 8–28 (IFFVFLTLLIISIGYLLLQSV) threads the bilayer. Residues 29–763 (DLQRIRELLH…KDATTVRLRI (735 aa)) lie on the Lumenal side of the membrane. Residues Asn71, Asn157, and Asn169 are each glycosylated (N-linked (GlcNAc...) asparagine). The segment at 617–659 (LVPPDLPNQREPGSPPDTKPEMEFRKSWKSRKKDTDEINEKLP) is disordered. Positions 649 to 659 (KDTDEINEKLP) are enriched in basic and acidic residues.

This sequence belongs to the MNN1/MNT family.

The protein localises to the golgi apparatus membrane. Its pathway is protein modification; protein glycosylation. Responsible for addition of the terminal mannose residues to the outer chain of core N-linked polysaccharides and to O-linked mannotriose. Implicated in late Golgi modifications. The protein is Putative alpha-1,3-mannosyltransferase MNN15 (MNN15) of Candida albicans (strain SC5314 / ATCC MYA-2876) (Yeast).